A 286-amino-acid chain; its full sequence is Tryptophan 2,3-dioxygenase (286 aa).

Substrate is bound by residues Phe-53–His-57, Tyr-115, and Arg-119. Heme is bound at residue His-242. Thr-256 contacts substrate.

The protein belongs to the tryptophan 2,3-dioxygenase family. As to quaternary structure, homotetramer. Heme is required as a cofactor.

The catalysed reaction is L-tryptophan + O2 = N-formyl-L-kynurenine. The protein operates within amino-acid degradation; L-tryptophan degradation via kynurenine pathway; L-kynurenine from L-tryptophan: step 1/2. Functionally, heme-dependent dioxygenase that catalyzes the oxidative cleavage of the L-tryptophan (L-Trp) pyrrole ring and converts L-tryptophan to N-formyl-L-kynurenine. Catalyzes the oxidative cleavage of the indole moiety. The polypeptide is Tryptophan 2,3-dioxygenase (Kineococcus radiotolerans (strain ATCC BAA-149 / DSM 14245 / SRS30216)).